A 189-amino-acid chain; its full sequence is HGPRTase-like protein 2 (189 aa).

The protein belongs to the purine/pyrimidine phosphoribosyltransferase family. Archaeal HPRT subfamily.

Its function is as follows. May catalyze a purine salvage reaction, the substrate is unknown. The sequence is that of HGPRTase-like protein 2 from Haloarcula marismortui (strain ATCC 43049 / DSM 3752 / JCM 8966 / VKM B-1809) (Halobacterium marismortui).